We begin with the raw amino-acid sequence, 313 residues long: D-alanine--D-alanine ligase (313 aa).

The ATP-grasp domain occupies 108 to 308 (KLVWQQLGIP…YQELVVGVLA (201 aa)). ATP is bound at residue 138 to 193 (VAKLGLPLFVKPASEGSSVAVIKVKSADALPAALIEAVKYDKIVVVEKSVEGGGEY). Aspartate 262, glutamate 275, and asparagine 277 together coordinate Mg(2+).

Belongs to the D-alanine--D-alanine ligase family. It depends on Mg(2+) as a cofactor. Mn(2+) serves as cofactor.

It is found in the cytoplasm. The catalysed reaction is 2 D-alanine + ATP = D-alanyl-D-alanine + ADP + phosphate + H(+). Its pathway is cell wall biogenesis; peptidoglycan biosynthesis. Its function is as follows. Cell wall formation. In Paraburkholderia phytofirmans (strain DSM 17436 / LMG 22146 / PsJN) (Burkholderia phytofirmans), this protein is D-alanine--D-alanine ligase.